A 418-amino-acid polypeptide reads, in one-letter code: Serine--tRNA ligase (418 aa).

Thr227–Glu229 lines the L-serine pocket. Residues Arg258–Glu260 and Val274 contribute to the ATP site. Glu281 serves as a coordination point for L-serine. Residue Glu345–Ser348 participates in ATP binding. Thr380 lines the L-serine pocket.

Belongs to the class-II aminoacyl-tRNA synthetase family. Type-1 seryl-tRNA synthetase subfamily. Homodimer. The tRNA molecule binds across the dimer.

Its subcellular location is the cytoplasm. It catalyses the reaction tRNA(Ser) + L-serine + ATP = L-seryl-tRNA(Ser) + AMP + diphosphate + H(+). The enzyme catalyses tRNA(Sec) + L-serine + ATP = L-seryl-tRNA(Sec) + AMP + diphosphate + H(+). Its pathway is aminoacyl-tRNA biosynthesis; selenocysteinyl-tRNA(Sec) biosynthesis; L-seryl-tRNA(Sec) from L-serine and tRNA(Sec): step 1/1. Functionally, catalyzes the attachment of serine to tRNA(Ser). Is also able to aminoacylate tRNA(Sec) with serine, to form the misacylated tRNA L-seryl-tRNA(Sec), which will be further converted into selenocysteinyl-tRNA(Sec). The chain is Serine--tRNA ligase from Rhodococcus jostii (strain RHA1).